A 401-amino-acid polypeptide reads, in one-letter code: Sorting nexin-4 (401 aa).

The PX domain maps to 17–139 (FLQCLVTEPR…AFLENPNWNN (123 aa)). Residues R60, S62, K86, and R105 each coordinate a 1,2-diacyl-sn-glycero-3-phospho-(1D-myo-inositol-3-phosphate). The residue at position 62 (S62) is a Phosphoserine. A coiled-coil region spans residues 190-292 (ISNLEGSIQK…DVEALQEYSA (103 aa)).

The protein belongs to the sorting nexin family.

The protein resides in the cytoplasm. It is found in the cytosol. The protein localises to the preautophagosomal structure membrane. Its subcellular location is the endosome membrane. Its function is as follows. Sorting nexin, involved in the separation or division of vacuoles throughout the entire life cycle of the cells. Involved in retrieval of late-Golgi SNAREs from post-Golgi endosomes to the trans-Golgi network, for cytoplasm to vacuole transport (Cvt), and autophagy of large cargos including mitophagy, pexophagy and glycophagy. The sequence is that of Sorting nexin-4 (snx4) from Schizosaccharomyces pombe (strain 972 / ATCC 24843) (Fission yeast).